The sequence spans 268 residues: Phosphatidylglycerol--prolipoprotein diacylglyceryl transferase (268 aa).

3 helical membrane-spanning segments follow: residues 25-45, 57-77, and 93-113; these read WYGVFFALSFLCGLYLMTKVF, YLFYYMIAGTVIGARLGHCFF, and VWHGGLASHGGVLGILTAVYF. R142 contacts a 1,2-diacyl-sn-glycero-3-phospho-(1'-sn-glycerol). A run of 4 helical transmembrane segments spans residues 151–171, 175–195, 204–224, and 236–256; these read IIGIPTDVSWAFIFARVDLLP, VQLYESIVYFLIFGFLMLAYW, GLLLGTILTSVFSARFLLEFF, and PLSVGQWLSIPAVIIGVLLIF.

This sequence belongs to the Lgt family.

It is found in the cell inner membrane. It catalyses the reaction L-cysteinyl-[prolipoprotein] + a 1,2-diacyl-sn-glycero-3-phospho-(1'-sn-glycerol) = an S-1,2-diacyl-sn-glyceryl-L-cysteinyl-[prolipoprotein] + sn-glycerol 1-phosphate + H(+). It participates in protein modification; lipoprotein biosynthesis (diacylglyceryl transfer). Functionally, catalyzes the transfer of the diacylglyceryl group from phosphatidylglycerol to the sulfhydryl group of the N-terminal cysteine of a prolipoprotein, the first step in the formation of mature lipoproteins. This is Phosphatidylglycerol--prolipoprotein diacylglyceryl transferase from Chloroherpeton thalassium (strain ATCC 35110 / GB-78).